Reading from the N-terminus, the 420-residue chain is S-adenosylmethionine synthase (420 aa).

Position 16 (His16) interacts with ATP. Asp18 contacts Mg(2+). K(+) is bound at residue Glu44. L-methionine contacts are provided by Glu57 and Gln100. The segment at 100 to 110 (QSADIAQGVDK) is flexible loop. ATP is bound by residues 175–177 (DGK), 251–252 (KF), Asp260, 266–267 (RK), Ala283, and Lys287. Asp260 contributes to the L-methionine binding site. Lys291 provides a ligand contact to L-methionine.

It belongs to the AdoMet synthase family. In terms of assembly, homotetramer; dimer of dimers. Mg(2+) serves as cofactor. The cofactor is K(+).

Its subcellular location is the cytoplasm. It catalyses the reaction L-methionine + ATP + H2O = S-adenosyl-L-methionine + phosphate + diphosphate. The protein operates within amino-acid biosynthesis; S-adenosyl-L-methionine biosynthesis; S-adenosyl-L-methionine from L-methionine: step 1/1. In terms of biological role, catalyzes the formation of S-adenosylmethionine (AdoMet) from methionine and ATP. The overall synthetic reaction is composed of two sequential steps, AdoMet formation and the subsequent tripolyphosphate hydrolysis which occurs prior to release of AdoMet from the enzyme. The polypeptide is S-adenosylmethionine synthase (Trichodesmium erythraeum (strain IMS101)).